The sequence spans 173 residues: Dirigent protein 8 (173 aa).

Positions 1–22 (MTNLILIFAAQILLFYAVASVG) are cleaved as a signal peptide. Asn69, Asn90, and Asn125 each carry an N-linked (GlcNAc...) asparagine glycan.

It belongs to the plant dirigent protein family. Homodimer.

The protein localises to the secreted. It localises to the extracellular space. Its subcellular location is the apoplast. Functionally, dirigent proteins impart stereoselectivity on the phenoxy radical-coupling reaction, yielding optically active lignans from two molecules of coniferyl alcohol in the biosynthesis of lignans, flavonolignans, and alkaloids and thus plays a central role in plant secondary metabolism. The polypeptide is Dirigent protein 8 (DIR8) (Arabidopsis thaliana (Mouse-ear cress)).